The following is a 725-amino-acid chain: Calcium-responsive transcription factor (725 aa).

Residues 572–592 (TSPDESPAVVSVNNQPSSSPS) are disordered. The span at 577–592 (SPAVVSVNNQPSSSPS) shows a compositional bias: low complexity.

It is found in the nucleus. Functionally, acts as a transcriptional activator that mediates the calcium- and neuron-selective induction of BDNF exon III transcription. Binds to the consensus calcium-response element CaRE1 5'-CTATTTCGAG-3' sequence. This chain is Calcium-responsive transcription factor (CARF), found in Homo sapiens (Human).